Consider the following 61-residue polypeptide: Small ribosomal subunit protein uS14 (61 aa).

Zn(2+) contacts are provided by C24, C27, C40, and C43.

Belongs to the universal ribosomal protein uS14 family. Zinc-binding uS14 subfamily. Part of the 30S ribosomal subunit. Contacts proteins S3 and S10. Requires Zn(2+) as cofactor.

Binds 16S rRNA, required for the assembly of 30S particles and may also be responsible for determining the conformation of the 16S rRNA at the A site. The polypeptide is Small ribosomal subunit protein uS14 (Treponema denticola (strain ATCC 35405 / DSM 14222 / CIP 103919 / JCM 8153 / KCTC 15104)).